Consider the following 152-residue polypeptide: Aspartate-rich protein (152 aa).

The signal sequence occupies residues 1–19; that stretch reads MQKLLLAVLFFSLLAVATA. Residues 82–113 show a composition bias toward basic and acidic residues; sequence ATPKTEAEPGSLDKGEGTKGEKGKEGKKEKGE. Positions 82–152 are disordered; sequence ATPKTEAEPG…VHENDDENED (71 aa). A compositionally biased stretch (acidic residues) spans 135 to 152; it reads DDDDDRDDVHENDDENED.

As to expression, prismatic layer of shell (at protein level). Expressed primarily in the mantle with highest level in the mantle edge and lower level in the mantle pallium.

It localises to the secreted. This Margaritifera margaritifera (Freshwater pearl mussel) protein is Aspartate-rich protein.